Here is a 190-residue protein sequence, read N- to C-terminus: Putative manganese efflux pump MntP (190 aa).

Helical transmembrane passes span 3-23 (MSAT…ASIG), 41-61 (LIFG…GFFA), 62-82 (SQYI…ILGG), 105-127 (LALL…VGLA), 143-163 (ATMI…PILG), and 168-188 (VMGG…HLGY).

Belongs to the MntP (TC 9.B.29) family.

The protein localises to the cell inner membrane. Probably functions as a manganese efflux pump. The chain is Putative manganese efflux pump MntP from Pectobacterium carotovorum subsp. carotovorum (strain PC1).